The sequence spans 559 residues: MAAQGFLLNASFLLILLVLAKPLGSGLARLIAAVPLPGVAGVERILWRTLGITDHEMNWRQYLLALLTLNLLGLGILFCLLFWQEWLPLNPQRLPGLSWDLALNTAVSFVTNTNWQAYSGESTLSYFSQMAGLTVQNFLSAATGIAVVFALIRAFTRQNVHTLGNAWQDLVRITLWILFPVALIIALFFIQQGVPQNLSAYQPITTLEGAKQLLPMGPVASQEAIKMLGTNGGGFFNANSSHPFENPTVLTNLAQMLAIFLIPAALCFAFGEAAGDRRQGRALLWAMSFIFVVCVAVVMWAEVQGNPHLLAAGADSSVNMEGKETRFGVLASSLFAVVTTAASCGAVNAMHDSFTALGGMVPMWLMQIGEVVFGGVGSGLYGMLLFVLLAVFIAGLMIGRTPEYLGKKIDVHEMKMTALAILVTPMLVLLGSALAMMTDAGRSAMLNPGPHGFSEVLYAVSSAANNNGSAFAGLSANSPFWNCLLAFCMFVGRFGVIIPVMAIAGSLVSKKVQPASQGTLATHGALFIGLLIGTVLLVGALTFIPALALGPVAEHFSLP.

13 helical membrane passes run G5 to S25, L27 to W47, L63 to W83, G132 to I152, L170 to I190, L253 to A273, L283 to V303, F327 to V347, A356 to V376, G379 to G399, M416 to M436, L484 to A504, and G524 to I544.

Belongs to the KdpA family. The system is composed of three essential subunits: KdpA, KdpB and KdpC.

Its subcellular location is the cell inner membrane. In terms of biological role, part of the high-affinity ATP-driven potassium transport (or Kdp) system, which catalyzes the hydrolysis of ATP coupled with the electrogenic transport of potassium into the cytoplasm. This subunit binds the periplasmic potassium ions and delivers the ions to the membrane domain of KdpB through an intramembrane tunnel. The protein is Potassium-transporting ATPase potassium-binding subunit of Salmonella newport (strain SL254).